Consider the following 144-residue polypeptide: MLMPKRVKYRRQHRGKMRGQAKGGTTVAFGEYGLQATEASWITSRQIEAARIAMTRYMKRGGKVWIKIFPDKPYTAKPLEVRMGSGKGAPEGWVAVVKPGKIMFEIAGVSEEVAREALRLASHKLPVKTKFVKREEIGGESNEG.

Belongs to the universal ribosomal protein uL16 family. In terms of assembly, part of the 50S ribosomal subunit.

Binds 23S rRNA and is also seen to make contacts with the A and possibly P site tRNAs. The sequence is that of Large ribosomal subunit protein uL16 from Oceanobacillus iheyensis (strain DSM 14371 / CIP 107618 / JCM 11309 / KCTC 3954 / HTE831).